A 115-amino-acid polypeptide reads, in one-letter code: Large ribosomal subunit protein bL19 (115 aa).

Belongs to the bacterial ribosomal protein bL19 family.

This protein is located at the 30S-50S ribosomal subunit interface and may play a role in the structure and function of the aminoacyl-tRNA binding site. The protein is Large ribosomal subunit protein bL19 of Baumannia cicadellinicola subsp. Homalodisca coagulata.